The sequence spans 71 residues: Cell division protein ZapB (71 aa).

The stretch at 5 to 67 (LEVLEQLESK…RALLGKMEQM (63 aa)) forms a coiled coil.

The protein belongs to the ZapB family. Homodimer. The ends of the coiled-coil dimer bind to each other, forming polymers. Interacts with FtsZ.

It localises to the cytoplasm. Non-essential, abundant cell division factor that is required for proper Z-ring formation. It is recruited early to the divisome by direct interaction with FtsZ, stimulating Z-ring assembly and thereby promoting cell division earlier in the cell cycle. Its recruitment to the Z-ring requires functional FtsA or ZipA. The protein is Cell division protein ZapB of Aeromonas salmonicida (strain A449).